The chain runs to 254 residues: 3-deoxy-manno-octulosonate cytidylyltransferase (254 aa).

This sequence belongs to the KdsB family.

It is found in the cytoplasm. It catalyses the reaction 3-deoxy-alpha-D-manno-oct-2-ulosonate + CTP = CMP-3-deoxy-beta-D-manno-octulosonate + diphosphate. It functions in the pathway nucleotide-sugar biosynthesis; CMP-3-deoxy-D-manno-octulosonate biosynthesis; CMP-3-deoxy-D-manno-octulosonate from 3-deoxy-D-manno-octulosonate and CTP: step 1/1. The protein operates within bacterial outer membrane biogenesis; lipopolysaccharide biosynthesis. Functionally, activates KDO (a required 8-carbon sugar) for incorporation into bacterial lipopolysaccharide in Gram-negative bacteria. This chain is 3-deoxy-manno-octulosonate cytidylyltransferase, found in Polynucleobacter asymbioticus (strain DSM 18221 / CIP 109841 / QLW-P1DMWA-1) (Polynucleobacter necessarius subsp. asymbioticus).